The sequence spans 615 residues: MKVALLANPARGEINVLLATAYELIRLGHDVTFLTGSSFANAIAEFRSEQNDPILAARIHFSDLGNARAVEDFTRGMQSHLKGLRKPPGDYSSMEICQIVALVTEQEFRDAATMVRDRLLEIEPDMIAVDALSPNLVTGCRMTGLPWMFTVPCSPSLTATRKSLFDPHPMGRRRQRTLMSALENLKLTFIETYRNATKKDLYARRALLKNEFGLNSMGFNGDSAIVPPLWKDRNCVGGIHFNTPGLTDSIRQPHQIHFVGAGVTSDPENHDTPVFEAASFLKQLSPSSSTTFKPLFPPLSKTGRDLDVEWMDEAYAAGQLVVYLNMGSMFLWTDAEVRSCLRAFERLYEQSGGKIKLLFKLNKPKRTPNNTGASTPTAPISSPDFEEKQRTVMGSARPVGASNLVSEKLADAIKNVTPRRKTDADKGYSQFTLSEFEGLEYVRFTRWVHDQRSIYKHPALRVVIHHGGGNSFNEAVHYALPQMILSQWFDTHEYAILAERFGIGLRSKHAPKIDENDLVNTMTRLLQGPEAEKIRRNAKVWSIRSRNAGGAPAAARLIEAQAMLFNQQKQLELAASEVRAAVDTLSGKSSVADLESETAFTPNMLSGAASTVGSD.

Positions arginine 366–glutamate 387 are disordered. The span at threonine 367 to isoleucine 380 shows a compositional bias: polar residues.

This sequence belongs to the UDP-glycosyltransferase family.

Its subcellular location is the vacuole membrane. The protein operates within secondary metabolite biosynthesis. Erythritol-mannosyl-transferase; part of the gene cluster that mediates the biosynthesis of mannosylerythritol lipids (MELs), surface-active substances that enhance the availability of water-insoluble substrates. Mannosylerythritol lipid production is responsible for hemolytic activity of Ustilago maydis. Depending on the number of acetyl groups, mannosylerythritol lipids can be differentiated into MEL A (fully acetylated), MEL B and MEL C (monoacetylated at R-6 and R-4, respectively), and the fully deacetylated MEL D. The first step in the pathway is the generation of mannosylerythritol by the glycosyltransferase EMT1 which catalyzes the transfer of GDP-mannose to the C-4 atom of meso-erythritol. This reaction has to be stereospecific, since only mannosyl-D-erythritol is generated. The produced disaccharide is subsequently acylated with fatty acids of various lengths derived from the peroxisomal beta-oxidation by the peroxisomal acyltransferases MAC1 and MAC2 at positions C-2 and C-3, repectively. The existence of MEL derivatives which carry an acetyl group at C-2 implies that at least MAC1 also accepts acetyl-CoA as a donor. The final step of MEL biosynthesis is the acetylation of the fully acylated mannosylerythritol lipids catalyzed by the acetyl-CoA-dependent acetyltransferase MAT1. MAT1 displays a relaxed regioselectivity and is able to transfer acetylgroups to both positions C-4 and C-6 of the mannosyl moiety. This is Erythritol-mannosyl-transferase 1 from Mycosarcoma maydis (Corn smut fungus).